Here is a 477-residue protein sequence, read N- to C-terminus: MFPVFPCTLLAPPFPVLGLDSRGVGGLMNSFPPPQGHAQNPLQVGAELQSRFFASQGCAQSPFQAAPAPPPTPQAPAAEPLQVDLLPVLAAAQESAAAAAAAAAAAAAVVTAPPAPAAASTVDTAALKQPPAPPPPPPAVSAPAAEAAPPAAAATIAAAAATAVVAPTSTVAVAPVASVLEKKTKSKGPYICALCAKEFKNGYNLRRHEAIHTGAKAGRVPSGAMKMPTMVPLSLLSVPQLSGASGGGGEAGAGGGTTAVAAGGVVTTTASGKRIRKNHACEMCGKAFRDVYHLNRHKLSHSDEKPYQCPVCQQRFKRKDRMSYHVRSHDGAVHKPYNCSHCGKSFSRPDHLNSHVRQVHSTERPFKCEKCEAAFATKDRLRAHTVRHEEKVPCHVCGKMLSSAYISDHMKVHSQGPHHVCELCNKGTGEVCPMAAAAAAAAAAAAAVVAAPPTAVGSLSGAEGVPVSSQPLPSQPW.

Disordered regions lie at residues alanine 59–alanine 78 and threonine 121–alanine 144. The span at proline 130–valine 140 shows a compositional bias: pro residues. 4 consecutive C2H2-type zinc fingers follow at residues tyrosine 190–histidine 212, histidine 279–histidine 301, tyrosine 307–histidine 329, and tyrosine 337–histidine 360. Serine 361 is subject to Phosphoserine. A C2H2-type 5 zinc finger spans residues phenylalanine 366–histidine 388. A C2H2-type 6; atypical zinc finger spans residues valine 392 to histidine 413.

Interacts with BPTF. Expressed in Purkinje cells in the brain (at protein level).

The protein localises to the nucleus. In terms of biological role, transcriptional regulator. Acts as a transcriptional activator that binds to purine-rich GAGA sites found in the promoter of many genes including insulin I and II and islet amyloid polypeptide. The protein is Myc-associated zinc finger protein (Maz) of Mus musculus (Mouse).